The sequence spans 305 residues: UDP-3-O-acyl-N-acetylglucosamine deacetylase (305 aa).

3 residues coordinate Zn(2+): His-79, His-238, and Asp-242. The active-site Proton donor is His-265.

The protein belongs to the LpxC family. The cofactor is Zn(2+).

The enzyme catalyses a UDP-3-O-[(3R)-3-hydroxyacyl]-N-acetyl-alpha-D-glucosamine + H2O = a UDP-3-O-[(3R)-3-hydroxyacyl]-alpha-D-glucosamine + acetate. It participates in glycolipid biosynthesis; lipid IV(A) biosynthesis; lipid IV(A) from (3R)-3-hydroxytetradecanoyl-[acyl-carrier-protein] and UDP-N-acetyl-alpha-D-glucosamine: step 2/6. Functionally, catalyzes the hydrolysis of UDP-3-O-myristoyl-N-acetylglucosamine to form UDP-3-O-myristoylglucosamine and acetate, the committed step in lipid A biosynthesis. The polypeptide is UDP-3-O-acyl-N-acetylglucosamine deacetylase (Vibrio vulnificus (strain CMCP6)).